Consider the following 428-residue polypeptide: Chaperone SurA (428 aa).

Positions 1-20 are cleaved as a signal peptide; the sequence is MKNWKTLLLGIAMIANTSFA. PpiC domains are found at residues 171-272 and 282-382; these read STEL…KVND and VTEV…ELLD.

Its subcellular location is the periplasm. The enzyme catalyses [protein]-peptidylproline (omega=180) = [protein]-peptidylproline (omega=0). Chaperone involved in the correct folding and assembly of outer membrane proteins. Recognizes specific patterns of aromatic residues and the orientation of their side chains, which are found more frequently in integral outer membrane proteins. May act in both early periplasmic and late outer membrane-associated steps of protein maturation. This chain is Chaperone SurA, found in Shigella dysenteriae serotype 1 (strain Sd197).